We begin with the raw amino-acid sequence, 138 residues long: Putative pre-16S rRNA nuclease (138 aa).

Belongs to the YqgF nuclease family.

The protein resides in the cytoplasm. In terms of biological role, could be a nuclease involved in processing of the 5'-end of pre-16S rRNA. This is Putative pre-16S rRNA nuclease from Geobacillus thermodenitrificans (strain NG80-2).